The primary structure comprises 3019 residues: Genome polyprotein (3019 aa).

Ser2 carries the post-translational modification N-acetylserine; by host. Residues 2-23 (STLPKPQRITKRNINRRPQDVK) are interaction with STAT1. Residues 2 to 58 (STLPKPQRITKRNINRRPQDVKFPGGGQIVGGVYVLPRRGPKLGVRAVRKTSERSQP) are interaction with EIF2AK2/PKR. Positions 2–59 (STLPKPQRITKRNINRRPQDVKFPGGGQIVGGVYVLPRRGPKLGVRAVRKTSERSQPR) are interaction with DDX3X. Positions 2 to 75 (STLPKPQRIT…PRARRTEGRS (74 aa)) are disordered. The Cytoplasmic portion of the chain corresponds to 2-168 (STLPKPQRIT…EDGINFATGN (167 aa)). 2 short sequence motifs (nuclear localization signal) span residues 5 to 13 (PKPQRITKR) and 38 to 43 (PRRGPK). Position 53 is a phosphoserine; by host (Ser53). 2 consecutive short sequence motifs (nuclear localization signal) follow at residues 58–64 (PRSRRQP) and 66–71 (PRARRT). Positions 58–68 (PRSRRQPIPRA) are enriched in basic residues. 2 positions are modified to phosphoserine; by host: Ser99 and Ser116. Residues 112-152 (PRRRSRNLGKVIDTLTCGFADLMGYIPLVGAPVGGVARALA) form an important for endoplasmic reticulum and mitochondrial localization region. The interaction with APOA2 stretch occupies residues 122 to 173 (VIDTLTCGFADLMGYIPLVGAPVGGVARALAHGVRALEDGINFATGNLPGCS). An important for lipid droplets localization region spans residues 164-167 (FATG). The chain crosses the membrane as a helical span at residues 169–189 (LPGCSFSIFLLALLSCLLTPT). The propeptide at 178 to 191 (LLALLSCLLTPTAG) is ER anchor for the core protein, removed in mature form by host signal peptidase. The Lumenal segment spans residues 190–358 (AGLEYRNASG…IGAHWGVMAG (169 aa)). 3 N-linked (GlcNAc...) asparagine; by host glycosylation sites follow: Asn196, Asn209, and Asn234. Residues 265–296 (MVGAATLCSALYVGDLCGALFLVGQGFSWRHR) form an important for fusion region. A glycan (N-linked (GlcNAc...) asparagine; by host) is linked at Asn305. The chain crosses the membrane as a helical span at residues 359-379 (VAYYSMQGNWAKVFLVLCLFS). At 380–730 (GVDASTTITG…WEFVILIFLL (351 aa)) the chain is on the lumenal side. The tract at residues 385–412 (TTITGGVAASGAFTITSLFSTGAKQPLH) is HVR1. 3 N-linked (GlcNAc...) (high mannose) asparagine; by host glycosylation sites follow: Asn417, Asn423, and Asn430. Disulfide bonds link Cys429–Cys553, Cys452–Cys459, Cys487–Cys495, and Cys504–Cys509. Asn448 carries an N-linked (GlcNAc...) asparagine; by host glycan. The tract at residues 475–479 (ANISG) is HVR2. Asn476 is a glycosylation site (N-linked (GlcNAc...) asparagine; by host). The interval 481–494 (SSEKPYCWHYAPRP) is CD81-binding 1. Residue Asn533 is glycosylated (N-linked (GlcNAc...) asparagine; by host). Residues 545–552 (PPTEPWFG) form a CD81-binding 2 region. An N-linked (GlcNAc...) asparagine; by host glycan is attached at Asn557. 4 disulfides stabilise this stretch: Cys565-Cys570, Cys586-Cys590, Cys602-Cys625, and Cys612-Cys649. N-linked (GlcNAc...) (high mannose) asparagine; by host glycosylation is found at Asn628 and Asn650. Cys657 and Cys682 are disulfide-bonded. Residues 665-676 (SEMYPLLHSTTE) form a PKR/eIF2-alpha phosphorylation homology domain (PePHD) region. The chain crosses the membrane as a helical span at residues 731–751 (LADARVCVVLWMMMLISQAEA). At 752 to 762 (ALENLIVLNAI) the chain is on the lumenal side. The chain crosses the membrane as a helical span at residues 763-783 (SAAGTHGIWWSLVAFCVAWHV). At 784 to 786 (RGR) the chain is on the cytoplasmic side. The helical transmembrane segment at 787 to 808 (IFPIAVYSIVGLWPLLLLVLML) threads the bilayer. Residues 809–818 (PYRAYAWTGT) are Lumenal-facing. Residues 819-839 (DTSTLGAGVLSLFALFTLSPW) form a helical membrane-spanning segment. Residues 840–843 (YKHW) lie on the Cytoplasmic side of the membrane. A helical transmembrane segment spans residues 844 to 863 (IARLIWWNQYTIARCEAALQ). The Lumenal portion of the chain corresponds to 864-886 (IWVPPLLARGARDGIILLAGLFY). A helical transmembrane segment spans residues 887–907 (PALVFDITKLLLAILGPLYIL). A Peptidase C18 domain is found at 908–1031 (QASLVRVPYF…DYRSMGWRLL (124 aa)). Topologically, residues 908-1662 (QASLVRVPYF…CMAADLEVAT (755 aa)) are cytoplasmic. Residues 909–1211 (ASLVRVPYFV…PVESLSAQTR (303 aa)) are protease NS2-3. Cys927 carries S-palmitoyl cysteine; by host lipidation. The segment at 934–954 (TGGKYVQMVLLALARGFNTYL) is interaction with host SCPS1. Catalysis depends on for protease NS2 activity; shared with dimeric partner residues His957, Glu977, and Cys998. Residues 1032 to 1213 (APITAHAQQT…ESLSAQTRSP (182 aa)) enclose the Peptidase S29 domain. Residues His1088 and Asp1112 each act as charge relay system; for serine protease NS3 activity in the active site. Cys1128 and Cys1130 together coordinate Zn(2+). Residue Ser1170 is the Charge relay system; for serine protease NS3 activity of the active site. The Zn(2+) site is built by Cys1176 and His1180. An ATP-binding site is contributed by 1235–1242 (APTGSGES). Mg(2+)-binding residues include Ser1242 and Glu1322. Residues 1321–1324 (DECH) carry the DECH box motif. The Helicase C-terminal domain maps to 1366 to 1543 (NIEEVALTGE…ELTPSETTVR (178 aa)). A disordered region spans residues 1482–1505 (VPQDAVSRSQRRGRTGRGKSGTYR). The tract at residues 1491–1503 (QRRGRTGRGKSGT) is RNA-binding. The chain crosses the membrane as a helical span at residues 1663-1683 (SAWVLLGGVMAALTAYCLSVG). Residues 1684-1695 (SVVIVGHLVLGG) form an NS3-binding region. The Cytoplasmic segment spans residues 1684-1810 (SVVIVGHLVL…SVTSPLTTNQ (127 aa)). The helical transmembrane segment at 1811 to 1829 (TLLFNIMGGWVASNLAPPP) threads the bilayer. Residues 1830-1833 (ASTA) lie on the Lumenal side of the membrane. Residues 1834–1854 (FVVSGLAGAAVGSIGLGKVLL) form a helical membrane-spanning segment. Residue Asp1855 is a topological domain, cytoplasmic. A helical membrane pass occupies residues 1856-1876 (ILAGYGAGVAGALVAFKIMGG). The Lumenal segment spans residues 1877–1886 (EMPSTEDMVN). Residues 1887–1907 (LLPAILSPGALVVGVICAAIL) traverse the membrane as a helical segment. The Cytoplasmic segment spans residues 1908 to 1977 (RRHVGPGEGA…WINEDYPTPC (70 aa)). Cys1977 carries S-palmitoyl cysteine; by host lipidation. An intramembrane segment occupies 1978 to 2007 (DGNWLYDIWNWVCTVLADFKLWLGAKILPK). Residues 2008 to 2998 (MPGIPFLSCQ…YHSVSRARSR (991 aa)) are Cytoplasmic-facing. Zn(2+) contacts are provided by Cys2016, Cys2034, Cys2036, and Cys2057. An FKBP8-binding region spans residues 2125 to 2213 (EFFTELDGVR…ASSSASQLSA (89 aa)). Positions 2125–2337 (EFFTELDGVR…PVPPPRRKRT (213 aa)) are transcriptional activation. Residues 2140–2144 (PVCRP) are interaction with non-structural protein 4A. Residues 2191-2225 (AKRRLDRGSPPSLASSSASQLSAPSRKATCTTHGR) are disordered. Residues 2194–2446 (RLDRGSPPSL…ALITPCAAEE (253 aa)) are interaction with host SKP2. 6 positions are modified to phosphoserine; by host: Ser2199, Ser2202, Ser2206, Ser2209, Ser2212, and Ser2215. Low complexity predominate over residues 2199 to 2215 (SPPSLASSSASQLSAPS). An ISDR region spans residues 2215–2254 (SRKATCTTHGRHPDAELITANLLWRQEMGSNITRVESESK). An interaction with EIF2AK2/PKR region spans residues 2215–2280 (SRKATCTTHG…DELSVAAECF (66 aa)). The NS4B-binding stretch occupies residues 2254-2311 (KVVILDSFEPLRACDDEDELSVAAECFKKPPKYPPALPIWARPDYNPPLVEPWKDPDY). Residues 2304–2382 (EPWKDPDYVP…GTQSGSLTGP (79 aa)) form a V3 region. An SH3-binding motif is present at residues 2327 to 2330 (PPVP). The Nuclear localization signal signature appears at 2332–2340 (PRRKRTIVL). A Glycyl lysine isopeptide (Lys-Gly) (interchain with G-Cter in ubiquitin) cross-link involves residue Lys2355. Residues 2356–2417 (SFPQPTCSAE…PDLSSGSWST (62 aa)) are disordered. Over residues 2369-2381 (TSGVGTQSGSLTG) the composition is skewed to polar residues. Phosphoserine; by host occurs at positions 2457 and 2470. One can recognise a RdRp catalytic domain in the interval 2642 to 2760 (PLGFSYDTRC…IAESAGIDED (119 aa)). Mg(2+) is bound by residues Asp2648, Asp2746, and Asp2747. Residues 2999 to 3019 (HLLLGLLLLTVGVGIFLLPAR) traverse the membrane as a helical segment.

It belongs to the hepacivirus polyprotein family. Homooligomer. Interacts with E1 (via C-terminus). Interacts with the non-structural protein 5A. Interacts (via N-terminus) with host STAT1 (via SH2 domain); this interaction results in decreased STAT1 phosphorylation and ubiquitin-mediated proteasome-dependent STAT1 degradation, leading to decreased IFN-stimulated gene transcription. Interacts with host STAT3; this interaction constitutively activates STAT3. Interacts with host LTBR receptor. Interacts with host TNFRSF1A receptor and possibly induces apoptosis. Interacts with host HNRPK. Interacts with host YWHAE. Interacts with host UBE3A/E6AP. Interacts with host DDX3X. Interacts with host APOA2. Interacts with host RXRA protein. Interacts with host SP110 isoform 3/Sp110b; this interaction sequesters the transcriptional corepressor SP110 away from the nucleus. Interacts with host CREB3 nuclear transcription protein; this interaction triggers cell transformation. Interacts with host ACY3. Interacts with host C1QR1. Interacts with host RBM24; this interaction, which enhances the interaction of the mature core protein with 5'-UTR, may inhibit viral translation and favor replication. Interacts with host EIF2AK2/PKR; this interaction induces the autophosphorylation of EIF2AK2. Part of the viral assembly initiation complex composed of NS2, E1, E2, NS3, NS4A, NS5A and the mature core protein. As to quaternary structure, forms a heterodimer with envelope glycoprotein E2. Interacts with mature core protein. Interacts with protease NS2. The heterodimer E1/E2 interacts with host CLDN1; this interaction plays a role in viral entry into host cell. Interacts with host SPSB2 (via C-terminus). Part of the viral assembly initiation complex composed of NS2, E1, E2, NS3, NS4A, NS5A and the mature core protein. Interacts with host NEURL3; this interaction prevents E1 binding to glycoprotein E2. In terms of assembly, forms a heterodimer with envelope glycoprotein E1. Interacts with host CD81 and SCARB1 receptors; these interactions play a role in viral entry into host cell. Interacts with host EIF2AK2/PKR; this interaction inhibits EIF2AK2 and probably allows the virus to evade the innate immune response. Interacts with host CD209/DC-SIGN and CLEC4M/DC-SIGNR. Interact with host SPCS1; this interaction is essential for viral particle assembly. Interacts with protease NS2. The heterodimer E1/E2 interacts with host CLDN1; this interaction plays a role in viral entry into host cell. Part of the viral assembly initiation complex composed of NS2, E1, E2, NS3, NS4A, NS5A and the mature core protein. Interacts with host SLC3A2/4F2hc; the interaction may facilitate viral entry into host cell. Interacts with human PLSCR1. Homohexamer. Homoheptamer. Interacts with protease NS2. As to quaternary structure, homodimer. Interacts with host SPCS1; this interaction is essential for viral particle assembly. Interacts with envelope glycoprotein E1. Interacts with envelope glycoprotein E2. Interacts with viroporin p7. Interacts with serine protease/helicase NS3. Part of the replication complex composed of NS2, NS3, NS4A, NS4B, NS5A and the RNA-directed RNA polymerase embedded in an ER-derived membranous web. Part of the viral assembly initiation complex composed of NS2, E1, E2, NS3, NS4A, NS5A and the mature core protein. In terms of assembly, interacts with protease NS2. Interacts with non-structural protein 4A; this interaction stabilizes the folding of NS3 serine protease. NS3-NS4A interaction is essential for NS3 activation and allows membrane anchorage of the latter. NS3/NS4A complex also prevents phosphorylation of host IRF3, thus preventing the establishment of dsRNA induced antiviral state. Interacts with host MAVS; this interaction leads to the cleavage and inhibition of host MAVS. Interacts with host TICAM1; this interaction leads to the cleavage and inhibition of host TICAM1. Interacts with host TANK-binding kinase/TBK1; this interaction results in the inhibition of the association between TBK1 and IRF3, which leads to the inhibition of IRF3 activation. Interacts with host RBM24. Part of the replication complex composed of NS2, NS3, NS4A, NS4B, NS5A and the RNA-directed RNA polymerase embedded in an ER-derived membranous web. Part of the viral assembly initiation complex composed of NS2, E1, E2, NS3, NS4A, NS5A and the mature core protein. Interacts with NS3 serine protease; this interaction stabilizes the folding of NS3 serine protease. NS3-NS4A interaction is essential for NS3 activation and allows membrane anchorage of the latter. Interacts with non-structural protein 5A (via N-terminus). Part of the replication complex composed of NS2, NS3, NS4A, NS4B, NS5A and the RNA-directed RNA polymerase embedded in an ER-derived membranous web. Part of the viral assembly initiation complex composed of NS2, E1, E2, NS3, NS4A, NS5A and the mature core protein. As to quaternary structure, homomultimer. Interacts with non-structural protein NS5A. Interacts with host PLA2G4C; this interaction likely initiates the recruitment of replication complexes to lipid droplets. Interacts with host STING; this interaction disrupts the interaction between STING and TBK1 thereby suppressing the interferon signaling. Part of the replication complex composed of NS2, NS3, NS4A, NS4B, NS5A and the RNA-directed RNA polymerase embedded in an ER-derived membranous web. In terms of assembly, monomer. Homodimer; dimerization is required for RNA-binding. Interacts with the mature core protein. Interacts (via N-terminus) with non-structural protein 4A. Interacts with non-structural protein 4B. Interacts (via region D2) with RNA-directed RNA polymerase. Part of the viral assembly initiation complex composed of NS2, E1, E2, NS3, NS4A, NS5A and the mature core protein. Part of the replication complex composed of NS2, NS3, NS4A, NS4B, NS5A and the RNA-directed RNA polymerase embedded in an ER-derived membranous web. Interacts with host GRB2. Interacts with host BIN1. Interacts with host PIK3R1. Interacts with host SRCAP. Interacts with host FKBP8. Interacts (via C-terminus) with host VAPB (via MSP domain). Interacts with host EIF2AK2/PKR; this interaction leads to disruption of EIF2AK2 dimerization by NS5A and probably allows the virus to evade the innate immune response. Interacts (via N-terminus) with host PACSIN2 (via N-terminus); this interaction attenuates protein kinase C alpha-mediated phosphorylation of PACSIN2 by disrupting the interaction between PACSIN2 and PRKCA. Interacts (via N-terminus) with host SRC kinase (via SH2 domain). Interacts with most Src-family kinases. Interacts with host IFI27 and SKP2; promotes the ubiquitin-mediated proteasomal degradation of NS5A. Interacts with host GPS2. Interacts with host TNFRSF21; this interaction allows the modulation by the virus of JNK, p38 MAPK, STAT3, and Akt signaling pathways in a DR6-dependent manner. Interacts (via N-terminus) with host CIDEB (via N-terminus); this interaction seems to regulate the association of HCV particles with APOE. Interacts with host CHKA/Choline Kinase-alpha; CHKA bridges host PI4KA and NS5A and potentiates NS5A-stimulated PI4KA activity, which then facilitates the targeting of the ternary complex to the ER for viral replication. Interacts with host SPSB2 (via C-terminus); this interaction targets NS5A for ubiquitination and degradation. Interacts with host RAB18; this interaction may promote the association of NS5A and other replicase components with lipid droplets. Interacts (via region D2) with host PPIA/CYPA; the interaction stimulates RNA-binding ability of NS5A and is dependent on the peptidyl-prolyl cis-trans isomerase activity of PPIA/CYPA. Interacts with host TRIM14; this interaction induces the degradation of NS5A. Homooligomer. Interacts with non-structural protein 5A. Interacts with host VAPB. Interacts with host PRK2/PKN2. Interacts with host HNRNPA1 and SEPT6; these interactions facilitate viral replication. Part of the replication complex composed of NS2, NS3, NS4A, NS4B, NS5A and the RNA-directed RNA polymerase. Zn(2+) is required as a cofactor. Requires Mg(2+) as cofactor. Post-translationally, specific enzymatic cleavages in vivo yield mature proteins. The structural proteins, core, E1, E2 and p7 are produced by proteolytic processing by host signal peptidases. The core protein precursor is synthesized as a 23 kDa, which is retained in the ER membrane through the hydrophobic signal peptide. Cleavage by the signal peptidase releases the 21 kDa mature core protein. The cleavage of the core protein precursor occurs between aminoacids 176 and 188 but the exact cleavage site is not known. Some degraded forms of the core protein appear as well during the course of infection. The other proteins (p7, NS2, NS3, NS4A, NS4B, NS5A and NS5B) are cleaved by the viral proteases. Autoprocessing between NS2 and NS3 is mediated by the NS2 cysteine protease catalytic domain and regulated by the NS3 N-terminal domain. Phosphorylated by host PKC and PKA. In terms of processing, ubiquitinated; mediated by UBE3A and leading to core protein subsequent proteasomal degradation. Post-translationally, highly N-glycosylated. Palmitoylation is required for NS2/3 autoprocessing and E2 recruitment to membranes. In terms of processing, palmitoylated. This modification may play a role in its polymerization or in protein-protein interactions. Post-translationally, phosphorylated on serines in a basal form termed p56. p58 is a hyperphosphorylated form of p56. p56 and p58 coexist in the cell in roughly equivalent amounts. Hyperphosphorylation is dependent on the presence of NS4A. Host CSNK1A1/CKI-alpha or RPS6KB1 kinases may be responsible for NS5A phosphorylation. Tyrosine phosphorylation is essential for the interaction with host SRC. In terms of processing, ubiquitinated. Ubiquitination, most probably at Lys-2355, mediated by host IFI27 and SKP2 leads to proteasomal degradation, restricting viral infection. Ubiquitination by host TRIM22 leads to interruption of viral replication. Post-translationally, the N-terminus is phosphorylated by host PRK2/PKN2.

It localises to the host endoplasmic reticulum membrane. The protein localises to the host mitochondrion membrane. It is found in the virion. Its subcellular location is the host cytoplasm. The protein resides in the host nucleus. It localises to the host lipid droplet. The protein localises to the virion membrane. It is found in the host mitochondrion. Its subcellular location is the host cell membrane. The protein resides in the host perinuclear region. The enzyme catalyses Hydrolysis of four peptide bonds in the viral precursor polyprotein, commonly with Asp or Glu in the P6 position, Cys or Thr in P1 and Ser or Ala in P1'.. The catalysed reaction is a ribonucleoside 5'-triphosphate + H2O = a ribonucleoside 5'-diphosphate + phosphate + H(+). It catalyses the reaction ATP + H2O = ADP + phosphate + H(+). It carries out the reaction RNA(n) + a ribonucleoside 5'-triphosphate = RNA(n+1) + diphosphate. Inhibited by the antiviral drug hexamethylene amiloride. Inhibition by amantadine appears to be genotype-dependent. Also inhibited by long-alkyl-chain iminosugar derivatives. Its activity is regulated as follows. Activity is up-regulated by PRK2/PKN2-mediated phosphorylation. Packages viral RNA to form a viral nucleocapsid, and promotes virion budding. Participates in the viral particle production as a result of its interaction with the non-structural protein 5A. Binds RNA and may function as a RNA chaperone to induce the RNA structural rearrangements taking place during virus replication. Modulates viral translation initiation by interacting with viral IRES and 40S ribosomal subunit. Affects various cell signaling pathways, host immunity and lipid metabolism. Prevents the establishment of cellular antiviral state by blocking the interferon-alpha/beta (IFN-alpha/beta) and IFN-gamma signaling pathways and by blocking the formation of phosphorylated STAT1 and promoting ubiquitin-mediated proteasome-dependent degradation of STAT1. Activates STAT3 leading to cellular transformation. Regulates the activity of cellular genes, including c-myc and c-fos. May repress the promoter of p53, and sequester CREB3 and SP110 isoform 3/Sp110b in the cytoplasm. Represses cell cycle negative regulating factor CDKN1A, thereby interrupting an important check point of normal cell cycle regulation. Targets transcription factors involved in the regulation of inflammatory responses and in the immune response: suppresses TNF-induced NF-kappa-B activation, and activates AP-1. Binds to dendritic cells (DCs) via C1QR1, resulting in down-regulation of T-lymphocytes proliferation. Alters lipid metabolism by interacting with hepatocellular proteins involved in lipid accumulation and storage. Induces up-regulation of FAS promoter activity, and thereby contributes to the increased triglyceride accumulation in hepatocytes (steatosis). In terms of biological role, forms a heterodimer with envelope glycoprotein E2, which mediates virus attachment to the host cell, virion internalization through clathrin-dependent endocytosis and fusion with host membrane. Fusion with the host cell is most likely mediated by both E1 and E2, through conformational rearrangements of the heterodimer required for fusion rather than a classical class II fusion mechanism. E1/E2 heterodimer binds host apolipoproteins such as APOB and ApoE thereby forming a lipo-viro-particle (LVP). APOE associated to the LVP allows the initial virus attachment to cell surface receptors such as the heparan sulfate proteoglycans (HSPGs), syndecan-1 (SDC1), syndecan-1 (SDC2), the low-density lipoprotein receptor (LDLR) and scavenger receptor class B type I (SCARB1). The cholesterol transfer activity of SCARB1 allows E2 exposure and binding of E2 to SCARB1 and the tetraspanin CD81. E1/E2 heterodimer binding on CD81 activates the epithelial growth factor receptor (EGFR) signaling pathway. Diffusion of the complex E1-E2-EGFR-SCARB1-CD81 to the cell lateral membrane allows further interaction with Claudin 1 (CLDN1) and occludin (OCLN) to finally trigger HCV entry. Its function is as follows. Forms a heterodimer with envelope glycoprotein E1, which mediates virus attachment to the host cell, virion internalization through clathrin-dependent endocytosis and fusion with host membrane. Fusion with the host cell is most likely mediated by both E1 and E2, through conformational rearrangements of the heterodimer required for fusion rather than a classical class II fusion mechanism. The interaction between envelope glycoprotein E2 and host apolipoprotein E/APOE allows the proper assembly, maturation and infectivity of the viral particles. This interaction is probably promoted via the up-regulation of cellular autophagy by the virus. E1/E2 heterodimer binds host apolipoproteins such as APOB and APOE thereby forming a lipo-viro-particle (LVP). APOE associated to the LVP allows the initial virus attachment to cell surface receptors such as the heparan sulfate proteoglycans (HSPGs), syndecan-1 (SDC1), syndecan-1 (SDC2), the low-density lipoprotein receptor (LDLR) and scavenger receptor class B type I (SCARB1). The cholesterol transfer activity of SCARB1 allows E2 exposure and binding of E2 to SCARB1 and the tetraspanin CD81. E1/E2 heterodimer binding on CD81 activates the epithelial growth factor receptor (EGFR) signaling pathway. Diffusion of the complex E1-E2-EGFR-SCARB1-CD81 to the cell lateral membrane allows further interaction with Claudin 1 (CLDN1) and occludin (OCLN) to finally trigger HCV entry. Inhibits host EIF2AK2/PKR activation, preventing the establishment of an antiviral state. Viral ligand for CD209/DC-SIGN and CLEC4M/DC-SIGNR, which are respectively found on dendritic cells (DCs), and on liver sinusoidal endothelial cells and macrophage-like cells of lymph node sinuses. These interactions allow the capture of circulating HCV particles by these cells and subsequent facilitated transmission to permissive cells such as hepatocytes and lymphocyte subpopulations. The interaction between E2 and host amino acid transporter complex formed by SLC3A2 and SLC7A5/LAT1 may facilitate viral entry into host cell. Functionally, ion channel protein that acts as a viroporin and plays an essential role in the assembly, envelopment and secretion of viral particles. Regulates the host cell secretory pathway, which induces the intracellular retention of viral glycoproteins and favors assembly of viral particles. Creates a pore in acidic organelles and releases Ca(2+) and H(+) in the cytoplasm of infected cells, leading to a productive viral infection. High levels of cytoplasmic Ca(2+) may trigger membrane trafficking and transport of viral ER-associated proteins to viroplasms, sites of viral genome replication. This ionic imbalance induces the assembly of the inflammasome complex, which triggers the maturation of pro-IL-1beta into IL-1beta through the action of caspase-1. Targets also host mitochondria and induces mitochondrial depolarization. In addition of its role as a viroporin, acts as a lipid raft adhesion factor. Cysteine protease required for the proteolytic auto-cleavage between the non-structural proteins NS2 and NS3. The N-terminus of NS3 is required for the function of NS2 protease (active region NS2-3). Promotes the initiation of viral particle assembly by mediating the interaction between structural and non-structural proteins. In terms of biological role, displays three enzymatic activities: serine protease with a chymotrypsin-like fold, NTPase and RNA helicase. NS3 serine protease, in association with NS4A, is responsible for the cleavages of NS3-NS4A, NS4A-NS4B, NS4B-NS5A and NS5A-NS5B. The NS3/NS4A complex prevents phosphorylation of host IRF3, thus preventing the establishment of dsRNA induced antiviral state. The NS3/NS4A complex induces host amino acid transporter component SLC3A2, thus contributing to HCV propagation. NS3 RNA helicase binds to RNA and unwinds both dsDNA and dsRNA in the 3' to 5' direction, and likely resolves RNA complicated stable secondary structures in the template strand. Binds a single ATP and catalyzes the unzipping of a single base pair of dsRNA. Inhibits host antiviral proteins TBK1 and IRF3 thereby preventing the establishment of an antiviral state. Cleaves host MAVS/CARDIF thereby preventing the establishment of an antiviral state. Cleaves host TICAM1/TRIF, thereby disrupting TLR3 signaling and preventing the establishment of an antiviral state. Its function is as follows. Induces a specific membrane alteration that serves as a scaffold for the virus replication complex. This membrane alteration gives rise to the so-called ER-derived membranous web that contains the replication complex. NS4B self-interaction contributes to its function in membranous web formation. Promotes host TRIF protein degradation in a CASP8-dependent manner thereby inhibiting host TLR3-mediated interferon signaling. Disrupts the interaction between STING and TBK1 contributing to the inhibition of interferon signaling. Functionally, phosphorylated protein that is indispensable for viral replication and assembly. Both hypo- and hyperphosphorylated states are required for the viral life cycle. The hyperphosphorylated form of NS5A is an inhibitor of viral replication. Involved in RNA-binding and especially in binding to the viral genome. Zinc is essential for RNA-binding. Participates in the viral particle production as a result of its interaction with the mature viral core protein. Its interaction with host VAPB may target the viral replication complex to vesicles. Down-regulates viral IRES translation initiation. Mediates interferon resistance, presumably by interacting with and inhibiting host EIF2AK2/PKR. Prevents BIN1-induced apoptosis. Acts as a transcriptional activator of some host genes important for viral replication when localized in the nucleus. Via the interaction with host PACSIN2, modulates lipid droplet formation in order to promote virion assembly. Modulates TNFRSF21/DR6 signaling pathway for viral propagation. RNA-dependent RNA polymerase that performs primer-template recognition and RNA synthesis during viral replication. Initiates RNA transcription/replication at a flavin adenine dinucleotide (FAD), resulting in a 5'- FAD cap on viral RNAs. In this way, recognition of viral 5' RNA by host pattern recognition receptors can be bypassed, thereby evading activation of antiviral pathways. The sequence is that of Genome polyprotein from Homo sapiens (Human).